The following is a 377-amino-acid chain: Chorismate synthase (377 aa).

Arg47 is an NADP(+) binding site. Residues 124–126 (RSS), 252–253 (NS), Gly296, 311–315 (KPTPS), and Arg338 each bind FMN.

This sequence belongs to the chorismate synthase family. FMNH2 is required as a cofactor.

It carries out the reaction 5-O-(1-carboxyvinyl)-3-phosphoshikimate = chorismate + phosphate. It participates in metabolic intermediate biosynthesis; chorismate biosynthesis; chorismate from D-erythrose 4-phosphate and phosphoenolpyruvate: step 7/7. In terms of biological role, catalyzes the anti-1,4-elimination of the C-3 phosphate and the C-6 proR hydrogen from 5-enolpyruvylshikimate-3-phosphate (EPSP) to yield chorismate, which is the branch point compound that serves as the starting substrate for the three terminal pathways of aromatic amino acid biosynthesis. This reaction introduces a second double bond into the aromatic ring system. The protein is Chorismate synthase of Methanococcus vannielii (strain ATCC 35089 / DSM 1224 / JCM 13029 / OCM 148 / SB).